Here is a 5875-residue protein sequence, read N- to C-terminus: Probable E3 ubiquitin-protein ligase DDB_G0283893 (5875 aa).

Disordered regions lie at residues 17–64 (DNNN…QPPE), 164–185 (NNNNNNDNNSNNKTDDNNQSNN), 232–276 (DSNN…TTTS), 302–342 (PSFK…CGNG), 642–693 (TTTT…SPPI), 716–740 (SIRSSSNKVNEGTPKSSTTTTTTNA), 1081–1101 (ITPTNTTTTTTTTTPSTTSIP), 1291–1367 (DGWE…KEST), 1806–1851 (QESE…SSPP), 1952–1982 (KKPSSDQQHHSGGCHHSNHHHHHHHSRKDEV), 2008–2036 (EDEDELQYLSEDEKVVNGNENTGEEDDEE), 2109–2203 (KALK…TGSG), 2893–2930 (DSDDSDDEFPTVDENVTSSGLSTSAGGSGGGVAGTNDS), 3083–3119 (TSPSSSKGKSSSASASSSSSTTTATSTLPSNTQSGSN), and 3195–3214 (LLPPPSSSSNENVVDNDNTN). The span at 18-52 (NNNNNNNNNNNNNNNNNNNNNNNNNNNSNNNNNKN) shows a compositional bias: low complexity. A compositionally biased stretch (basic and acidic residues) spans 237–249 (DNKENKKEDKESS). 3 stretches are compositionally biased toward low complexity: residues 250-276 (KPIASSPIPITTTNIEKPTIATTTTTS), 317-333 (TSTITTQPLPSSTITQP), and 642-656 (TTTTTATTTTTTTTT). Residues 657–669 (NESIPMETTRSST) show a composition bias toward polar residues. Residues 670–693 (PIPIVNNNNNNNDSKSNSKKSPPI) are compositionally biased toward low complexity. A compositionally biased stretch (polar residues) spans 716–725 (SIRSSSNKVN). A compositionally biased stretch (low complexity) spans 728 to 740 (TPKSSTTTTTTNA). The span at 1297-1330 (FNDDDDEEEDEEEEEEMDEDDSENDEDEDSEESE) shows a compositional bias: acidic residues. A coiled-coil region spans residues 1300-1328 (DDDEEEDEEEEEEMDEDDSENDEDEDSEE). Composition is skewed to low complexity over residues 1347 to 1363 (TTTTTAAAATTTATATT) and 1838 to 1851 (SNSSPALTASSSPP). The segment covering 1963–1977 (GGCHHSNHHHHHHHS) has biased composition (basic residues). The segment at 2042 to 2113 (KVCTYTFTKN…KGNPCKALKP (72 aa)) adopts a UBR-type zinc-finger fold. Low complexity-rich tracts occupy residues 2118–2168 (PPKQ…TNTN) and 2178–2203 (SSSSSNSSPSFNNNNNNNNNGTTGSG). The span at 2893–2903 (DSDDSDDEFPT) shows a compositional bias: acidic residues. Residues 2908–2917 (VTSSGLSTSA) show a composition bias toward low complexity. Low complexity predominate over residues 3201–3211 (SSSNENVVDND). Residues 3226 to 3280 (EVLFSCDLCNINPITGKRWNCSNCGDFDLCNQCYQNPEKDHPKDHIFKEFIIDEP) form a ZZ-type zinc finger. The Zn(2+) site is built by Cys-3231, Cys-3234, Cys-3246, Cys-3249, Cys-3255, Cys-3258, His-3266, and His-3270. 3 disordered regions span residues 3282-3312 (KDGDEKESTNEPPQQQKQQDQQLQQDLQDDS), 3326-3359 (LNNNNNNNNNNESMDTSTLTTTTTTTNKTTPTTN), and 3754-3776 (SSTSQDTQQESSNNNNNNNSNDI). 2 stretches are compositionally biased toward low complexity: residues 3295 to 3307 (QQQKQQDQQLQQD) and 3327 to 3358 (NNNNNNNNNNESMDTSTLTTTTTTTNKTTPTT). The UIM domain maps to 3313 to 3332 (EYDEELKIAISMSLNNNNNN). Residues 3754–3763 (SSTSQDTQQE) show a composition bias toward polar residues. Over residues 3764-3774 (SSNNNNNNNSN) the composition is skewed to low complexity. Residues 4118 to 4146 (IENQEDHKRAIQTIEKESENAHKKYQRLI) adopt a coiled-coil conformation. Low complexity predominate over residues 4182 to 4222 (NTSTNSTGSNNQSINSSSGNISTNSSSSSSSSFGISNQSSS). Disordered stretches follow at residues 4182–4237 (NTST…GGVI), 4295–4323 (FISGGGQPSSNDKQQQQQQQQQQSSRQCP), and 4616–4671 (KILS…FDND). Residues 4223 to 4236 (GNGGGGVGSGGGGV) are compositionally biased toward gly residues. Residues 4308 to 4317 (QQQQQQQQQQ) show a composition bias toward low complexity. Residues 4585–4618 (QIQQQIALQQQQIQQQIQQQQQQLNESVSGLKIL) adopt a coiled-coil conformation. Composition is skewed to low complexity over residues 4619–4635 (SPSSSSSSPSGVGATGS) and 4645–4659 (SSGSSVSGSGSISSS). The segment at 5357 to 5870 (PALPFVLVLL…EYLLKLYKSV (514 aa)) is UBR4 E3 catalytic module. The HemiRING-type zinc-finger motif lies at 5476 to 5620 (GFTCMVCREG…WVNLNNISRV (145 aa)). Residues Cys-5479, Cys-5482, His-5554, and Cys-5557 each contribute to the Zn(2+) site. One can recognise a UZI domain in the interval 5623–5870 (PKFRILSHDL…EYLLKLYKSV (248 aa)). Positions 5819–5846 (QVDVKELLNCFENELKEFQDEMEFFDDE) form a coiled coil.

It belongs to the UBR4 family.

Its pathway is protein modification; protein ubiquitination. Functionally, probable E3 ubiquitin-protein ligase. This is Probable E3 ubiquitin-protein ligase DDB_G0283893 from Dictyostelium discoideum (Social amoeba).